We begin with the raw amino-acid sequence, 156 residues long: uncharacterized protein (156 aa).

This is an uncharacterized protein from Saccharomyces cerevisiae (strain ATCC 204508 / S288c) (Baker's yeast).